A 178-amino-acid polypeptide reads, in one-letter code: MSIAKRVQQWATFARTWHIYDCTWQNPFESAKLVKTHLLGLQKPIYHPMNDCGDHVVLINTREIALPGDEWVKRVYFHHTGYPGGASWTLAWQLHEKDPTMVMKKAVYNSMRGNLQRRHTMQRLHLFADDQVPEEILQNVTNQIRTPRSIPQRLDHIDKETLENFPNIMDYPKDYILR.

Belongs to the universal ribosomal protein uL13 family. Component of the mitochondrial ribosome large subunit (39S) which comprises a 16S rRNA and about 50 distinct proteins.

The protein localises to the mitochondrion. The protein is Large ribosomal subunit protein uL13m (mRpL13) of Drosophila melanogaster (Fruit fly).